Reading from the N-terminus, the 221-residue chain is 7-cyano-7-deazaguanine synthase (221 aa).

Residue 8–18 (MSGGMDSTLCA) participates in ATP binding. Zn(2+)-binding residues include C187, C195, C198, and C201.

This sequence belongs to the QueC family. Zn(2+) serves as cofactor.

It carries out the reaction 7-carboxy-7-deazaguanine + NH4(+) + ATP = 7-cyano-7-deazaguanine + ADP + phosphate + H2O + H(+). The protein operates within purine metabolism; 7-cyano-7-deazaguanine biosynthesis. Its function is as follows. Catalyzes the ATP-dependent conversion of 7-carboxy-7-deazaguanine (CDG) to 7-cyano-7-deazaguanine (preQ(0)). The polypeptide is 7-cyano-7-deazaguanine synthase (Campylobacter concisus (strain 13826)).